A 614-amino-acid polypeptide reads, in one-letter code: Zinc finger and SCAN domain-containing protein 2 (614 aa).

Disordered stretches follow at residues 1 to 26 (MMAA…EDRQ) and 43 to 76 (EAVL…PQGA). The region spanning 59–132 (SAGKGGPQEE…ALVEDLTQTL (74 aa)) is the SCAN box domain. 14 consecutive C2H2-type zinc fingers follow at residues 222–244 (YECP…ERTH), 250–272 (YKCD…QTTH), 278–300 (YKCR…QRIH), 306–328 (FQCA…QRTH), 334–356 (YSCP…QGIH), 362–384 (YECK…QRIH), 390–412 (YKCT…RRTH), 418–440 (YQCS…RRTH), 446–468 (YKCG…QGMH), 474–496 (YECL…QRIH), 502–524 (YKCS…QRTH), 530–552 (YKCL…QRAH), 558–580 (YRCP…QRIH), and 586–608 (YKCP…QRTH).

This sequence belongs to the krueppel C2H2-type zinc-finger protein family.

The protein localises to the nucleus. May be involved in transcriptional regulation during the post-meiotic stages of spermatogenesis. This is Zinc finger and SCAN domain-containing protein 2 (ZSCAN2) from Homo sapiens (Human).